The following is a 328-amino-acid chain: GTP 3',8-cyclase (328 aa).

The Radical SAM core domain maps to 9–229; it reads GFGRDVRYLR…DNGLNTGGPA (221 aa). Arg-18 contributes to the GTP binding site. Residues Cys-25 and Cys-29 each contribute to the [4Fe-4S] cluster site. Position 31 (Tyr-31) interacts with S-adenosyl-L-methionine. Residue Cys-32 participates in [4Fe-4S] cluster binding. A GTP-binding site is contributed by Arg-60. Gly-64 contacts S-adenosyl-L-methionine. A GTP-binding site is contributed by Thr-94. Residue Ser-118 participates in S-adenosyl-L-methionine binding. Residue Lys-154 coordinates GTP. Position 188 (Met-188) interacts with S-adenosyl-L-methionine. Residues Cys-252 and Cys-255 each contribute to the [4Fe-4S] cluster site. 257–259 provides a ligand contact to GTP; sequence RVR. Cys-269 is a [4Fe-4S] cluster binding site.

This sequence belongs to the radical SAM superfamily. MoaA family. Monomer and homodimer. Requires [4Fe-4S] cluster as cofactor.

The enzyme catalyses GTP + AH2 + S-adenosyl-L-methionine = (8S)-3',8-cyclo-7,8-dihydroguanosine 5'-triphosphate + 5'-deoxyadenosine + L-methionine + A + H(+). It functions in the pathway cofactor biosynthesis; molybdopterin biosynthesis. Catalyzes the cyclization of GTP to (8S)-3',8-cyclo-7,8-dihydroguanosine 5'-triphosphate. In Rhodobacter capsulatus (Rhodopseudomonas capsulata), this protein is GTP 3',8-cyclase.